Consider the following 400-residue polypeptide: MKILVLNAGSSSLKFQLFDMEDESVMAKGIVERIGLDKPFLSYSKGTDKIKFDKEEPINHKDALQWVLNTLTSHEYGVITTLQEIGAVGHRVVHGGEEFTGSVLITEEVIEALERNKNLAPLHNPPNLTGIYATKAVLPEVPMVGVFDTAFHATMPERAYLYALPIELYEKYKVRRYGFHGTSHRYVAMEAARRLGKTLSELRIISAHLGNGASVCAIQGGKSIDTSMGFTPLEGLVMGTRSGDLDPAIPIWMMRELGMSFDEVDNLLNKKSGVFGLVRGRSFDMRDIEDWMAAGDEEAKKAMEVYCYRLKKYIGGYAAVMGGVDVLIFTAGVGENSPIVREMVCEGLEFLGIKLDKEKNNSRGDAIISAADSKVVVMSIKTNEELMIARDTYEIVRGLT.

Asn-7 is a Mg(2+) binding site. Lys-14 contributes to the ATP binding site. Arg-91 contacts substrate. Residue Asp-148 is the Proton donor/acceptor of the active site. ATP-binding positions include 208-212 (HLGNG), 284-286 (DMR), and 332-336 (GVGEN). Mg(2+) is bound at residue Glu-384.

It belongs to the acetokinase family. In terms of assembly, homodimer. It depends on Mg(2+) as a cofactor. Mn(2+) serves as cofactor.

The protein resides in the cytoplasm. It catalyses the reaction acetate + ATP = acetyl phosphate + ADP. It functions in the pathway metabolic intermediate biosynthesis; acetyl-CoA biosynthesis; acetyl-CoA from acetate: step 1/2. Functionally, catalyzes the formation of acetyl phosphate from acetate and ATP. Can also catalyze the reverse reaction. The polypeptide is Acetate kinase (Coprothermobacter proteolyticus (strain ATCC 35245 / DSM 5265 / OCM 4 / BT)).